We begin with the raw amino-acid sequence, 387 residues long: Putative serine/threonine-protein kinase (387 aa).

A Protein kinase domain is found at 15 to 344 (YQIEKLLNRG…ERVLEGQVEI (330 aa)). ATP-binding positions include 21–29 (LNRGGMDSY) and K55. D164 functions as the Proton acceptor in the catalytic mechanism. The next 2 helical transmembrane spans lie at 232 to 252 (PPNAQYDIYSLGIILFEMLVG) and 363 to 383 (SIFTIVFIGLIIAAIVLLLIF).

Belongs to the protein kinase superfamily. Ser/Thr protein kinase family.

It localises to the cell membrane. It catalyses the reaction L-seryl-[protein] + ATP = O-phospho-L-seryl-[protein] + ADP + H(+). It carries out the reaction L-threonyl-[protein] + ATP = O-phospho-L-threonyl-[protein] + ADP + H(+). This chain is Putative serine/threonine-protein kinase, found in Mycoplasma genitalium (strain ATCC 33530 / DSM 19775 / NCTC 10195 / G37) (Mycoplasmoides genitalium).